The sequence spans 473 residues: Xylan O-acetyltransferase 14 (473 aa).

Residues 1–17 (MTTTGSTPPRKNRSNVT) show a composition bias toward polar residues. Positions 1 to 22 (MTTTGSTPPRKNRSNVTGGEGG) are disordered. Over 1–54 (MTTTGSTPPRKNRSNVTGGEGGSLEEYAWRAAGEAAAAKKATRAWGVSVSLRSH) the chain is Cytoplasmic. Residues 55 to 75 (FSSLVLLLLLLLVALAVSATT) traverse the membrane as a helical; Signal-anchor for type II membrane protein segment. Residues 76–101 (KNGDPAETPHAPPLPPPASIKLPSSS) are disordered. Residues 76–473 (KNGDPAETPH…NQLLYAHIVS (398 aa)) are Lumenal-facing. Intrachain disulfides connect Cys108–Cys159, Cys130–Cys195, Cys139–Cys455, and Cys370–Cys451. A GDS motif motif is present at residues 182-184 (GDS). Residue Ser184 is the Nucleophile of the active site. N-linked (GlcNAc...) asparagine glycosylation is found at Asn209, Asn223, and Asn414. The active-site Proton donor is Asp450. Residues 450 to 453 (DCIH) carry the DXXH motif motif. Residue His453 is the Proton acceptor of the active site.

This sequence belongs to the PC-esterase family. TBL subfamily.

It localises to the golgi apparatus membrane. Xylan acetyltransferase required for 2-O- and 3-O-monoacetylation of xylosyl residues in xylan. Catalyzes the 2-O-acetylation of xylan, followed by nonenzymatic acetyl migration to the O-3 position, resulting in products that are monoacetylated at both O-2 and O-3 positions. The polypeptide is Xylan O-acetyltransferase 14 (Oryza sativa subsp. japonica (Rice)).